The chain runs to 224 residues: LexA repressor (224 aa).

The H-T-H motif DNA-binding region spans 31–51; the sequence is RAEIAAEFGFKSANAAEEHLQ. Catalysis depends on for autocatalytic cleavage activity residues Ser142 and Lys179.

The protein belongs to the peptidase S24 family. As to quaternary structure, homodimer.

It carries out the reaction Hydrolysis of Ala-|-Gly bond in repressor LexA.. In terms of biological role, represses a number of genes involved in the response to DNA damage (SOS response), including recA and lexA. In the presence of single-stranded DNA, RecA interacts with LexA causing an autocatalytic cleavage which disrupts the DNA-binding part of LexA, leading to derepression of the SOS regulon and eventually DNA repair. This Paracidovorax citrulli (strain AAC00-1) (Acidovorax citrulli) protein is LexA repressor.